The following is a 358-amino-acid chain: Putative ankyrin repeat protein FPV242 (358 aa).

ANK repeat units lie at residues 6–35 (NNYR…NMIV), 40–69 (NNHT…NLVY), 91–118 (TRRN…DKGV), 119–147 (ELTG…SVEY), 149–177 (GFFP…DINK), 180–209 (CGET…DIEK), 214–243 (EQDP…SIDT), 248–277 (NHKP…NPFI), 280–312 (EGNT…RLPG), and 316–345 (YYIQ…RITS).

This chain is Putative ankyrin repeat protein FPV242, found in Fowlpox virus (strain NVSL) (FPV).